A 391-amino-acid polypeptide reads, in one-letter code: Homocitrate synthase AksA (391 aa).

Positions 20–271 (ITIYDTTLRD…DLGFNIGVLY (252 aa)) constitute a Pyruvate carboxyltransferase domain.

It belongs to the alpha-IPM synthase/homocitrate synthase family.

The enzyme catalyses acetyl-CoA + 2-oxoglutarate + H2O = (2R)-homocitrate + CoA + H(+). The catalysed reaction is 2-oxoadipate + acetyl-CoA + H2O = (R)-dihomocitrate + CoA + H(+). It carries out the reaction 2-oxoheptanedioate + acetyl-CoA + H2O = (R)-trihomocitrate + CoA + H(+). It functions in the pathway organic acid metabolism; 2-oxosuberate biosynthesis. In terms of biological role, catalyzes the condensation of alpha-ketoglutarate and acetyl-CoA to form (R)-homocitrate. Can also catalyze the condensation of alpha-ketoadipate with acetyl-CoA to form (R)-homo(2)citrate, and the condensation of alpha-ketopimelate with acetyl-CoA to form (R)-homo(3)citrate. These reactions are part of the biosynthesis pathway of coenzyme B and biotin. The protein is Homocitrate synthase AksA (aksA) of Methanothermobacter thermautotrophicus (strain ATCC 29096 / DSM 1053 / JCM 10044 / NBRC 100330 / Delta H) (Methanobacterium thermoautotrophicum).